Reading from the N-terminus, the 894-residue chain is Alanine--tRNA ligase (894 aa).

Residues His569, His573, Cys683, and His687 each contribute to the Zn(2+) site.

This sequence belongs to the class-II aminoacyl-tRNA synthetase family. Zn(2+) serves as cofactor.

The protein resides in the cytoplasm. The enzyme catalyses tRNA(Ala) + L-alanine + ATP = L-alanyl-tRNA(Ala) + AMP + diphosphate. Functionally, catalyzes the attachment of alanine to tRNA(Ala) in a two-step reaction: alanine is first activated by ATP to form Ala-AMP and then transferred to the acceptor end of tRNA(Ala). Also edits incorrectly charged Ser-tRNA(Ala) and Gly-tRNA(Ala) via its editing domain. In Chloroflexus aurantiacus (strain ATCC 29366 / DSM 635 / J-10-fl), this protein is Alanine--tRNA ligase.